Consider the following 50-residue polypeptide: Protein PndA (50 aa).

A helical membrane pass occupies residues 5 to 25 (TFLMMLIVICVTILCFVWMVR).

It belongs to the Hok/Gef family.

Its subcellular location is the cell inner membrane. In terms of biological role, toxic component of a type I toxin-antitoxin (TA) system. When expressed is involved in cellular Mg(2+) release and degradation of stable RNA. The polypeptide is Protein PndA (pndA) (Escherichia coli).